The chain runs to 35 residues: Cupiennin-2e (35 aa).

E35 carries the post-translational modification Glutamic acid 1-amide.

In terms of tissue distribution, expressed by the venom gland.

The protein resides in the secreted. The chain is Cupiennin-2e from Cupiennius salei (American wandering spider).